We begin with the raw amino-acid sequence, 381 residues long: Cytochrome b (381 aa).

4 helical membrane-spanning segments follow: residues 34–54 (FGSL…FLAM), 78–99 (WLIR…YLHI), 114–134 (WNIG…GYVL), and 179–199 (FFAF…IHLL). 2 residues coordinate heme b: His-84 and His-98. Positions 183 and 197 each coordinate heme b. His-202 is a binding site for a ubiquinone. Helical transmembrane passes span 227-247 (YKDL…ALFT), 289-309 (LGGV…PLLH), 321-341 (LTQI…WIGG), and 348-368 (FIMV…IIMP).

The protein belongs to the cytochrome b family. The cytochrome bc1 complex contains 3 respiratory subunits (MT-CYB, CYC1 and UQCRFS1), 2 core proteins (UQCRC1 and UQCRC2) and probably 6 low-molecular weight proteins. Heme b is required as a cofactor.

Its subcellular location is the mitochondrion inner membrane. Component of the ubiquinol-cytochrome c reductase complex (complex III or cytochrome b-c1 complex) that is part of the mitochondrial respiratory chain. The b-c1 complex mediates electron transfer from ubiquinol to cytochrome c. Contributes to the generation of a proton gradient across the mitochondrial membrane that is then used for ATP synthesis. The polypeptide is Cytochrome b (mt-cyb) (Negaprion brevirostris (Lemon shark)).